The primary structure comprises 533 residues: 1-aminocyclopropane-1-carboxylate synthase 5 (533 aa).

N6-(pyridoxal phosphate)lysine is present on lysine 358.

Belongs to the class-I pyridoxal-phosphate-dependent aminotransferase family. The cofactor is pyridoxal 5'-phosphate. As to expression, expressed in shoots and leaf blades. Expressed at low levels in leaf sheaths. Expressed in vasculature of roots and shoots.

The enzyme catalyses S-adenosyl-L-methionine = 1-aminocyclopropane-1-carboxylate + S-methyl-5'-thioadenosine + H(+). It participates in alkene biosynthesis; ethylene biosynthesis via S-adenosyl-L-methionine; ethylene from S-adenosyl-L-methionine: step 1/2. Its function is as follows. Catalyzes the formation of 1-aminocyclopropane-1-carboxylate, a direct precursor of ethylene in higher plants. The chain is 1-aminocyclopropane-1-carboxylate synthase 5 from Oryza sativa subsp. japonica (Rice).